A 312-amino-acid polypeptide reads, in one-letter code: Methionyl-tRNA formyltransferase (312 aa).

S109 to P112 contributes to the (6S)-5,6,7,8-tetrahydrofolate binding site.

Belongs to the Fmt family.

It catalyses the reaction L-methionyl-tRNA(fMet) + (6R)-10-formyltetrahydrofolate = N-formyl-L-methionyl-tRNA(fMet) + (6S)-5,6,7,8-tetrahydrofolate + H(+). In terms of biological role, attaches a formyl group to the free amino group of methionyl-tRNA(fMet). The formyl group appears to play a dual role in the initiator identity of N-formylmethionyl-tRNA by promoting its recognition by IF2 and preventing the misappropriation of this tRNA by the elongation apparatus. The sequence is that of Methionyl-tRNA formyltransferase from Listeria welshimeri serovar 6b (strain ATCC 35897 / DSM 20650 / CCUG 15529 / CIP 8149 / NCTC 11857 / SLCC 5334 / V8).